A 199-amino-acid chain; its full sequence is Large ribosomal subunit protein bL9 (199 aa).

The disordered stretch occupies residues 169–199; it reads TGGFTEEYDPNAEPGEIPTELLEGGEEAAEA.

It belongs to the bacterial ribosomal protein bL9 family.

Binds to the 23S rRNA. This chain is Large ribosomal subunit protein bL9, found in Novosphingobium aromaticivorans (strain ATCC 700278 / DSM 12444 / CCUG 56034 / CIP 105152 / NBRC 16084 / F199).